A 297-amino-acid polypeptide reads, in one-letter code: 33 kDa chaperonin (297 aa).

Intrachain disulfides connect C239–C241 and C272–C275.

Belongs to the HSP33 family. Post-translationally, under oxidizing conditions two disulfide bonds are formed involving the reactive cysteines. Under reducing conditions zinc is bound to the reactive cysteines and the protein is inactive.

The protein localises to the cytoplasm. Redox regulated molecular chaperone. Protects both thermally unfolding and oxidatively damaged proteins from irreversible aggregation. Plays an important role in the bacterial defense system toward oxidative stress. This is 33 kDa chaperonin from Clostridium acetobutylicum (strain ATCC 824 / DSM 792 / JCM 1419 / IAM 19013 / LMG 5710 / NBRC 13948 / NRRL B-527 / VKM B-1787 / 2291 / W).